A 612-amino-acid chain; its full sequence is Cytokine-like nuclear factor N-PAC (612 aa).

In terms of domain architecture, PWWP spans 22–81; it reads PKDLIWAKMKGFTPWPGMIVEPPLDLLTQQRRANTKCVFFFGSRNFAWIEENNIKPFEGP. Residues 168–270 are disordered; the sequence is AVEGENNADS…GASSSSPTAR (103 aa). Low complexity-rich tracts occupy residues 177-193 and 201-220; these read SSAS…TAKS and AKPV…TTKS. A compositionally biased stretch (polar residues) spans 228–240; it reads AHQTPTGANTSGL. Positions 276-279 are interaction with histone H3; that stretch reads DDLL. Residues 319–612 form a dehydrogenase domain region; sequence RDIVPSELTF…SSAVFVRSRF (294 aa). NAD(+) contacts are provided by residues 329–343, T421, and R564; that span reads GFLG…IVKD.

It belongs to the HIBADH-related family. NP60 subfamily. In terms of assembly, binds to mononucleosomes. Interacts with male-specific lethal (MSL) histone acetyltransferase complex at least composed of mof, msl-1, msl-2 and msl-3.

It is found in the chromosome. Its function is as follows. Nucleosome-destabilizing factor that is recruited to genes during transcriptional activation and colocalizes with a subset of trimethylated 'Lys-36' histone H3 (H3K36me3)-enriched regions. Binds DNA (in vitro). Facilitates Pol II transcription through nucleosomes. Facilitates male-specific lethal (MSL) histone acetyltransferase complex targeting to active genes on the X chromosome. Stimulates the acetylation of 'Lys-56' of nucleosomal histone H3 (H3K56ac) by nej. This chain is Cytokine-like nuclear factor N-PAC, found in Drosophila pseudoobscura pseudoobscura (Fruit fly).